Here is a 160-residue protein sequence, read N- to C-terminus: Ribosomal RNA large subunit methyltransferase H (160 aa).

S-adenosyl-L-methionine contacts are provided by residues L76, G108, and 127–132; that span reads LGKMTW.

Belongs to the RNA methyltransferase RlmH family. As to quaternary structure, homodimer.

It localises to the cytoplasm. The catalysed reaction is pseudouridine(1915) in 23S rRNA + S-adenosyl-L-methionine = N(3)-methylpseudouridine(1915) in 23S rRNA + S-adenosyl-L-homocysteine + H(+). Specifically methylates the pseudouridine at position 1915 (m3Psi1915) in 23S rRNA. This Rhizobium johnstonii (strain DSM 114642 / LMG 32736 / 3841) (Rhizobium leguminosarum bv. viciae) protein is Ribosomal RNA large subunit methyltransferase H.